Reading from the N-terminus, the 105-residue chain is Large ribosomal subunit protein uL24 (105 aa).

Positions 77-93 (DGKPTRVGYRKDDETGK) are enriched in basic and acidic residues. Residues 77–105 (DGKPTRVGYRKDDETGKNVRIAKSNGKDL) are disordered.

The protein belongs to the universal ribosomal protein uL24 family. As to quaternary structure, part of the 50S ribosomal subunit.

Functionally, one of two assembly initiator proteins, it binds directly to the 5'-end of the 23S rRNA, where it nucleates assembly of the 50S subunit. In terms of biological role, one of the proteins that surrounds the polypeptide exit tunnel on the outside of the subunit. This Mycolicibacterium gilvum (strain PYR-GCK) (Mycobacterium gilvum (strain PYR-GCK)) protein is Large ribosomal subunit protein uL24.